The following is a 422-amino-acid chain: Histidine--tRNA ligase (422 aa).

The protein belongs to the class-II aminoacyl-tRNA synthetase family. Homodimer.

The protein resides in the cytoplasm. It carries out the reaction tRNA(His) + L-histidine + ATP = L-histidyl-tRNA(His) + AMP + diphosphate + H(+). The polypeptide is Histidine--tRNA ligase (hisS) (Photobacterium profundum (strain SS9)).